Here is a 23-residue protein sequence, read N- to C-terminus: Dahlein-4.2 (23 aa).

Expressed by the skin dorsal glands.

The protein localises to the secreted. Has no antimicrobial activity. This Ranoidea dahlii (Dahl's aquatic frog) protein is Dahlein-4.2.